A 444-amino-acid polypeptide reads, in one-letter code: Protein translocase subunit SecY (444 aa).

Transmembrane regions (helical) follow at residues 24 to 44, 77 to 97, 123 to 143, 153 to 173, 181 to 201, 215 to 235, 269 to 289, 318 to 338, 376 to 396, and 400 to 420; these read FFVIGALLVFRAGSFVPIPGI, ILALGIMPYISASIVVQLLTV, GTLVLATFQAIGIATGLPNMV, MFTLIATVSLVTGTMFLMWLG, IGNGISILIFAGIVAGLPKAI, VLLLLLIAVLAFAVIYFVVFM, MAGVIPAIFASSIILFPGTLA, YVMLYAAAIIFFCFFYTALVF, LAGALYITFICLIPEFMMVAW, and FYFGGTSLLIVVVVIMDFMAQ.

It belongs to the SecY/SEC61-alpha family. Component of the Sec protein translocase complex. Heterotrimer consisting of SecY, SecE and SecG subunits. The heterotrimers can form oligomers, although 1 heterotrimer is thought to be able to translocate proteins. Interacts with the ribosome. Interacts with SecDF, and other proteins may be involved. Interacts with SecA.

Its subcellular location is the cell inner membrane. Its function is as follows. The central subunit of the protein translocation channel SecYEG. Consists of two halves formed by TMs 1-5 and 6-10. These two domains form a lateral gate at the front which open onto the bilayer between TMs 2 and 7, and are clamped together by SecE at the back. The channel is closed by both a pore ring composed of hydrophobic SecY resides and a short helix (helix 2A) on the extracellular side of the membrane which forms a plug. The plug probably moves laterally to allow the channel to open. The ring and the pore may move independently. This is Protein translocase subunit SecY from Vibrio cholerae serotype O1 (strain ATCC 39315 / El Tor Inaba N16961).